The chain runs to 324 residues: Glyoxylate/hydroxypyruvate reductase B (324 aa).

Catalysis depends on residues Arg237 and Glu266. The active-site Proton donor is His285.

This sequence belongs to the D-isomer specific 2-hydroxyacid dehydrogenase family. GhrB subfamily. Homodimer.

It localises to the cytoplasm. The enzyme catalyses glycolate + NADP(+) = glyoxylate + NADPH + H(+). The catalysed reaction is (R)-glycerate + NAD(+) = 3-hydroxypyruvate + NADH + H(+). It carries out the reaction (R)-glycerate + NADP(+) = 3-hydroxypyruvate + NADPH + H(+). Its function is as follows. Catalyzes the NADPH-dependent reduction of glyoxylate and hydroxypyruvate into glycolate and glycerate, respectively. The sequence is that of Glyoxylate/hydroxypyruvate reductase B from Salmonella typhi.